The following is a 453-amino-acid chain: Bifunctional protein GlmU (453 aa).

A pyrophosphorylase region spans residues 1–226 (MSFSAVILAA…PIEVEGVNNR (226 aa)). UDP-N-acetyl-alpha-D-glucosamine contacts are provided by residues 8–11 (LAAG), K22, Q73, 78–79 (GT), 100–102 (YGD), G137, E151, N166, and N224. D102 is a binding site for Mg(2+). Residue N224 participates in Mg(2+) binding. The interval 227 to 247 (IQLARLERAYQAMQAERLLEQ) is linker. Positions 248 to 453 (GVMLRDPSRF…KGWKRPVKQK (206 aa)) are N-acetyltransferase. Residues R330 and K348 each contribute to the UDP-N-acetyl-alpha-D-glucosamine site. Catalysis depends on H360, which acts as the Proton acceptor. UDP-N-acetyl-alpha-D-glucosamine-binding residues include Y363 and N374. Residues A377, 383 to 384 (NY), S402, A420, and R437 each bind acetyl-CoA.

This sequence in the N-terminal section; belongs to the N-acetylglucosamine-1-phosphate uridyltransferase family. It in the C-terminal section; belongs to the transferase hexapeptide repeat family. Homotrimer. Requires Mg(2+) as cofactor.

It is found in the cytoplasm. The enzyme catalyses alpha-D-glucosamine 1-phosphate + acetyl-CoA = N-acetyl-alpha-D-glucosamine 1-phosphate + CoA + H(+). It catalyses the reaction N-acetyl-alpha-D-glucosamine 1-phosphate + UTP + H(+) = UDP-N-acetyl-alpha-D-glucosamine + diphosphate. It participates in nucleotide-sugar biosynthesis; UDP-N-acetyl-alpha-D-glucosamine biosynthesis; N-acetyl-alpha-D-glucosamine 1-phosphate from alpha-D-glucosamine 6-phosphate (route II): step 2/2. It functions in the pathway nucleotide-sugar biosynthesis; UDP-N-acetyl-alpha-D-glucosamine biosynthesis; UDP-N-acetyl-alpha-D-glucosamine from N-acetyl-alpha-D-glucosamine 1-phosphate: step 1/1. Its pathway is bacterial outer membrane biogenesis; LPS lipid A biosynthesis. In terms of biological role, catalyzes the last two sequential reactions in the de novo biosynthetic pathway for UDP-N-acetylglucosamine (UDP-GlcNAc). The C-terminal domain catalyzes the transfer of acetyl group from acetyl coenzyme A to glucosamine-1-phosphate (GlcN-1-P) to produce N-acetylglucosamine-1-phosphate (GlcNAc-1-P), which is converted into UDP-GlcNAc by the transfer of uridine 5-monophosphate (from uridine 5-triphosphate), a reaction catalyzed by the N-terminal domain. This chain is Bifunctional protein GlmU, found in Photobacterium profundum (strain SS9).